A 155-amino-acid polypeptide reads, in one-letter code: Microsomal glutathione S-transferase 1 (155 aa).

The Lumenal segment spans residues 3–9; the sequence is NLSQLME. The helical transmembrane segment at 10 to 33 threads the bilayer; sequence NEVFMAFASYTTIVLSKMNFMSTA. The Cytoplasmic segment spans residues 34–62; it reads TAFYRLTKKVFANPEDCAGFGKGENAKKY. Residue R38 participates in glutathione binding. 3 positions are modified to N6-acetyllysine: K42, K55, and K60. A helical membrane pass occupies residues 63–96; it reads LRTDDRVERVRRAHLNDLENIVPFLGIGLLYSLS. Glutathione is bound by residues R73, R74, H76, and E81. Residues 97–99 are Lumenal-facing; sequence GPD. A helical membrane pass occupies residues 100-123; it reads LSTAILHFRLFVRARIYHTIAYLT. Y121 provides a ligand contact to glutathione. Residues 124-128 lie on the Cytoplasmic side of the membrane; the sequence is PLPQP. A helical membrane pass occupies residues 129 to 148; it reads NRALAFFIGYGVTLSMAYRL. Residues 149–155 are Lumenal-facing; that stretch reads LKSKLYL.

This sequence belongs to the MAPEG family. In terms of assembly, homotrimer; The trimer binds only one molecule of glutathione.

Its subcellular location is the endoplasmic reticulum membrane. It is found in the mitochondrion outer membrane. The enzyme catalyses RX + glutathione = an S-substituted glutathione + a halide anion + H(+). Functionally, conjugation of reduced glutathione to a wide number of exogenous and endogenous hydrophobic electrophiles. The protein is Microsomal glutathione S-transferase 1 (MGST1) of Bos taurus (Bovine).